A 340-amino-acid chain; its full sequence is Glyceraldehyde-3-phosphate dehydrogenase (340 aa).

NAD(+) is bound by residues 13-14 and Gly112; that span reads TI. Residue 141–143 coordinates D-glyceraldehyde 3-phosphate; that stretch reads SCN. The active-site Nucleophile is Cys142. NAD(+) is bound at residue Arg170. 196–197 is a binding site for D-glyceraldehyde 3-phosphate; that stretch reads HG. NAD(+) is bound at residue Gln302.

The protein belongs to the glyceraldehyde-3-phosphate dehydrogenase family. Homotetramer.

It localises to the cytoplasm. The catalysed reaction is D-glyceraldehyde 3-phosphate + phosphate + NADP(+) = (2R)-3-phospho-glyceroyl phosphate + NADPH + H(+). The enzyme catalyses D-glyceraldehyde 3-phosphate + phosphate + NAD(+) = (2R)-3-phospho-glyceroyl phosphate + NADH + H(+). Its pathway is carbohydrate degradation; glycolysis; pyruvate from D-glyceraldehyde 3-phosphate: step 1/5. This Archaeoglobus fulgidus (strain ATCC 49558 / DSM 4304 / JCM 9628 / NBRC 100126 / VC-16) protein is Glyceraldehyde-3-phosphate dehydrogenase (gap).